The following is a 217-amino-acid chain: Flagellar L-ring protein 1 (217 aa).

Residues 1 to 16 (MTLARLAPLAALLLAA) form the signal peptide. Cysteine 17 is lipidated: N-palmitoyl cysteine. Cysteine 17 carries the S-diacylglycerol cysteine lipid modification.

Belongs to the FlgH family. As to quaternary structure, the basal body constitutes a major portion of the flagellar organelle and consists of four rings (L,P,S, and M) mounted on a central rod.

It localises to the cell outer membrane. The protein resides in the bacterial flagellum basal body. Functionally, assembles around the rod to form the L-ring and probably protects the motor/basal body from shearing forces during rotation. In Chromobacterium violaceum (strain ATCC 12472 / DSM 30191 / JCM 1249 / CCUG 213 / NBRC 12614 / NCIMB 9131 / NCTC 9757 / MK), this protein is Flagellar L-ring protein 1.